The primary structure comprises 118 residues: UPF0344 protein BLi01172/BL01343 (118 aa).

The next 4 helical transmembrane spans lie at Ile6–Gly26, Ile33–Phe53, Glu62–Ile82, and Ala89–Leu109.

Belongs to the UPF0344 family.

The protein resides in the cell membrane. This Bacillus licheniformis (strain ATCC 14580 / DSM 13 / JCM 2505 / CCUG 7422 / NBRC 12200 / NCIMB 9375 / NCTC 10341 / NRRL NRS-1264 / Gibson 46) protein is UPF0344 protein BLi01172/BL01343.